The chain runs to 223 residues: 7-cyano-7-deazaguanine synthase (223 aa).

15-25 (FSGGQDSTTCL) contributes to the ATP binding site. Zn(2+) contacts are provided by C191, C200, C203, and C206.

The protein belongs to the QueC family. As to quaternary structure, homodimer. The cofactor is Zn(2+).

The enzyme catalyses 7-carboxy-7-deazaguanine + NH4(+) + ATP = 7-cyano-7-deazaguanine + ADP + phosphate + H2O + H(+). It participates in purine metabolism; 7-cyano-7-deazaguanine biosynthesis. In terms of biological role, catalyzes the ATP-dependent conversion of 7-carboxy-7-deazaguanine (CDG) to 7-cyano-7-deazaguanine (preQ(0)). This chain is 7-cyano-7-deazaguanine synthase, found in Staphylococcus epidermidis (strain ATCC 35984 / DSM 28319 / BCRC 17069 / CCUG 31568 / BM 3577 / RP62A).